The primary structure comprises 173 residues: SKP1-like protein 1 (173 aa).

Positions 115–173 (ILAANYLNIKGLLDLTCQTVADMIKGKTPEEIRKTFNIKNDFTPEEEEEIRRENQWAFE) are interaction with the F-box domain of F-box proteins.

This sequence belongs to the SKP1 family. Part of a SCF (SKP1-CUL1-F-box protein) E3 ubiquitin-protein ligase complex. Interacts directly with MOF (via F-box domain). Interacts with rice black streaked dwarf virus RBSDV protein P7-2. Is able to form the SCF complex together with CUL1 and the viral P7-2 protein. Interacts with D3.

The protein localises to the nucleus. The protein operates within protein modification; protein ubiquitination. Functionally, involved in ubiquitination and subsequent proteasomal degradation of target proteins. Together with CUL1, a RING-box and a F-box protein, it forms a SCF E3 ubiquitin ligase complex. The functional specificity of this complex depends on the type of F-box protein. In the SCF complex, it serves as an adapter that links the F-box protein to CUL1. The polypeptide is SKP1-like protein 1 (Oryza sativa subsp. japonica (Rice)).